Here is a 234-residue protein sequence, read N- to C-terminus: Carboxy-S-adenosyl-L-methionine synthase (234 aa).

S-adenosyl-L-methionine-binding positions include Tyr-35, 60–62 (GCS), 83–84 (DN), 109–110 (DI), Asn-124, and Arg-191.

Belongs to the class I-like SAM-binding methyltransferase superfamily. Cx-SAM synthase family. As to quaternary structure, homodimer.

The enzyme catalyses prephenate + S-adenosyl-L-methionine = carboxy-S-adenosyl-L-methionine + 3-phenylpyruvate + H2O. Functionally, catalyzes the conversion of S-adenosyl-L-methionine (SAM) to carboxy-S-adenosyl-L-methionine (Cx-SAM). This Campylobacter concisus (strain 13826) protein is Carboxy-S-adenosyl-L-methionine synthase.